Consider the following 300-residue polypeptide: Phosphatidylserine decarboxylase proenzyme (300 aa).

Catalysis depends on charge relay system; for autoendoproteolytic cleavage activity residues D113, H169, and S256. S256 (schiff-base intermediate with substrate; via pyruvic acid; for decarboxylase activity) is an active-site residue. Position 256 is a pyruvic acid (Ser); by autocatalysis (S256).

This sequence belongs to the phosphatidylserine decarboxylase family. PSD-B subfamily. Prokaryotic type II sub-subfamily. As to quaternary structure, heterodimer of a large membrane-associated beta subunit and a small pyruvoyl-containing alpha subunit. Pyruvate is required as a cofactor. Post-translationally, is synthesized initially as an inactive proenzyme. Formation of the active enzyme involves a self-maturation process in which the active site pyruvoyl group is generated from an internal serine residue via an autocatalytic post-translational modification. Two non-identical subunits are generated from the proenzyme in this reaction, and the pyruvate is formed at the N-terminus of the alpha chain, which is derived from the carboxyl end of the proenzyme. The autoendoproteolytic cleavage occurs by a canonical serine protease mechanism, in which the side chain hydroxyl group of the serine supplies its oxygen atom to form the C-terminus of the beta chain, while the remainder of the serine residue undergoes an oxidative deamination to produce ammonia and the pyruvoyl prosthetic group on the alpha chain. During this reaction, the Ser that is part of the protease active site of the proenzyme becomes the pyruvoyl prosthetic group, which constitutes an essential element of the active site of the mature decarboxylase.

The protein localises to the cell membrane. It carries out the reaction a 1,2-diacyl-sn-glycero-3-phospho-L-serine + H(+) = a 1,2-diacyl-sn-glycero-3-phosphoethanolamine + CO2. It functions in the pathway phospholipid metabolism; phosphatidylethanolamine biosynthesis; phosphatidylethanolamine from CDP-diacylglycerol: step 2/2. Functionally, catalyzes the formation of phosphatidylethanolamine (PtdEtn) from phosphatidylserine (PtdSer). The protein is Phosphatidylserine decarboxylase proenzyme of Ruminiclostridium cellulolyticum (strain ATCC 35319 / DSM 5812 / JCM 6584 / H10) (Clostridium cellulolyticum).